The chain runs to 129 residues: Small ribosomal subunit protein uS12 (129 aa).

Disordered stretches follow at residues 1–25 (MPTY…PALE) and 110–129 (RKQG…VTKK). Residues 10 to 20 (FGRKSKTRKTK) show a composition bias toward basic residues.

This sequence belongs to the universal ribosomal protein uS12 family. Part of the 30S ribosomal subunit. Contacts proteins S8 and S17. May interact with IF1 in the 30S initiation complex.

Functionally, with S4 and S5 plays an important role in translational accuracy. In terms of biological role, interacts with and stabilizes bases of the 16S rRNA that are involved in tRNA selection in the A site and with the mRNA backbone. Located at the interface of the 30S and 50S subunits, it traverses the body of the 30S subunit contacting proteins on the other side and probably holding the rRNA structure together. The combined cluster of proteins S8, S12 and S17 appears to hold together the shoulder and platform of the 30S subunit. This is Small ribosomal subunit protein uS12 from Rickettsia conorii (strain ATCC VR-613 / Malish 7).